Reading from the N-terminus, the 317-residue chain is Adenine deaminase (317 aa).

Zn(2+)-binding residues include His14, His16, and His194. The active-site Proton donor is Glu197. Residue Asp275 coordinates Zn(2+). Asp276 provides a ligand contact to substrate.

This sequence belongs to the metallo-dependent hydrolases superfamily. Adenosine and AMP deaminases family. Adenine deaminase type 2 subfamily. The cofactor is Zn(2+).

The catalysed reaction is adenine + H2O + H(+) = hypoxanthine + NH4(+). Catalyzes the hydrolytic deamination of adenine to hypoxanthine. Plays an important role in the purine salvage pathway and in nitrogen catabolism. In Bordetella bronchiseptica (strain ATCC BAA-588 / NCTC 13252 / RB50) (Alcaligenes bronchisepticus), this protein is Adenine deaminase.